The chain runs to 329 residues: Peroxidase 17 (329 aa).

Residues 1–19 form the signal peptide; sequence MSLLPHLILYLTLLTVVVT. 4 cysteine pairs are disulfide-bonded: cysteine 32–cysteine 112, cysteine 65–cysteine 70, cysteine 118–cysteine 315, and cysteine 197–cysteine 229. Histidine 63 functions as the Proton acceptor in the catalytic mechanism. Residues aspartate 64, valine 67, glycine 69, aspartate 71, and serine 73 each contribute to the Ca(2+) site. Proline 160 lines the substrate pocket. N-linked (GlcNAc...) asparagine glycosylation is found at asparagine 165 and asparagine 177. Histidine 190 provides a ligand contact to heme b. Serine 191 is a binding site for Ca(2+). Residues asparagine 206 and asparagine 236 are each glycosylated (N-linked (GlcNAc...) asparagine). Positions 242, 244, and 249 each coordinate Ca(2+).

It belongs to the peroxidase family. Classical plant (class III) peroxidase subfamily. It depends on heme b as a cofactor. Ca(2+) serves as cofactor.

It is found in the secreted. Its subcellular location is the vacuole. The enzyme catalyses 2 a phenolic donor + H2O2 = 2 a phenolic radical donor + 2 H2O. Functionally, removal of H(2)O(2), oxidation of toxic reductants, biosynthesis and degradation of lignin, suberization, auxin catabolism, response to environmental stresses such as wounding, pathogen attack and oxidative stress. These functions might be dependent on each isozyme/isoform in each plant tissue. This Arabidopsis thaliana (Mouse-ear cress) protein is Peroxidase 17 (PER17).